A 376-amino-acid chain; its full sequence is Putative F-box protein At1g30930 (376 aa).

In terms of domain architecture, F-box spans 1-44; the sequence is MKNSIPIDLIIEIVSRSTAKSVARCHCVSKQWRAIFRRKYFIEL.

The sequence is that of Putative F-box protein At1g30930 from Arabidopsis thaliana (Mouse-ear cress).